Here is a 538-residue protein sequence, read N- to C-terminus: Guanine nucleotide-binding protein-like 3 (538 aa).

Residues methionine 1–lysine 45 are compositionally biased toward basic residues. Positions methionine 1 to lysine 125 are disordered. Positions lysine 2–lysine 46 are basic. A coiled-coil region spans residues alanine 54–serine 95. The span at alanine 59–isoleucine 94 shows a compositional bias: basic and acidic residues. Lysine 79 bears the N6-acetyllysine mark. Lysine 91 is covalently cross-linked (Glycyl lysine isopeptide (Lys-Gly) (interchain with G-Cter in SUMO2)). Residues serine 95 and serine 101 each carry the phosphoserine modification. The span at serine 95–aspartate 110 shows a compositional bias: acidic residues. Basic residues predominate over residues lysine 115–lysine 125. The region spanning cysteine 129–serine 307 is the CP-type G domain. Asparagine 176–aspartate 179 lines the GTP pocket. Glycyl lysine isopeptide (Lys-Gly) (interchain with G-Cter in SUMO2) cross-links involve residues lysine 177, lysine 248, lysine 262, and lysine 270. GTP is bound at residue glycine 256–serine 263. Positions valine 277–serine 451 are intermediate. Aspartate 300 to cysteine 303 is a GTP binding site. 2 stretches are compositionally biased toward basic and acidic residues: residues glutamate 460–glutamate 473 and glutamine 481–glutamate 491. Residues glutamate 460–aspartate 532 are acidic. Positions glutamate 460–isoleucine 538 are disordered. A phosphoserine mark is found at serine 493, serine 505, and serine 518. A compositionally biased stretch (basic and acidic residues) spans proline 514–methionine 524.

This sequence belongs to the TRAFAC class YlqF/YawG GTPase family. In terms of assembly, interacts with MDM2; this interaction stabilizes MDM2. Interaction with MDM2 occurs in the nucleoplasm and is triggered by a nucleolar release mechanism, such as mitosis-induced nucleolar disassembly. May interact with p53/TP53 via its basic domain. This interaction is most probably indirect and mediated by MDM2-binding. Expressed in testis.

The protein localises to the nucleus. The protein resides in the nucleolus. May be required to maintain the proliferative capacity of stem cells. Stabilizes MDM2 by preventing its ubiquitination, and hence proteasomal degradation. This is Guanine nucleotide-binding protein-like 3 (Gnl3) from Rattus norvegicus (Rat).